Consider the following 487-residue polypeptide: Serine/threonine-protein kinase 4 (487 aa).

Position 1 is an N-acetylmethionine (methionine 1). Residue threonine 3 is modified to Phosphothreonine. The Protein kinase domain occupies 30 to 281 (FDVLEKLGEG…ATQLLQHPFV (252 aa)). Residues 36–44 (LGEGSYGSV) and lysine 59 contribute to the ATP site. The active-site Proton acceptor is the aspartate 149. Residue threonine 183 is modified to Phosphothreonine; by autocatalysis. Position 265 is a phosphoserine (serine 265). The stretch at 290–310 (LRDLINEAMDVKLKRQESQQR) forms a coiled coil. A compositionally biased stretch (basic and acidic residues) spans 303–312 (KRQESQQREV). Residues 303–332 (KRQESQQREVDQDDEENSEEDEMDSGTMVR) form a disordered region. Positions 313–326 (DQDDEENSEEDEMD) are enriched in acidic residues. The residue at position 320 (serine 320) is a Phosphoserine. Phosphothreonine is present on residues threonine 340 and threonine 367. Phosphothreonine; by PKB/AKT1 is present on threonine 387. Serine 410 and serine 414 each carry phosphoserine. Residue tyrosine 433 is modified to Phosphotyrosine. Residues 433–480 (YEFLKSWTVEDLQKRLLALDPMMEQEIEEIRQKYQSKRQPILDAIEAK) enclose the SARAH domain.

Belongs to the protein kinase superfamily. STE Ser/Thr protein kinase family. STE20 subfamily. Homodimer; mediated via the coiled-coil region. Interacts with NORE1, which inhibits autoactivation. Interacts with and stabilizes SAV1. Interacts with RASSF1. Interacts with FOXO3. Interacts with RASSF2 (via SARAH domain). Interacts with AR, PKB/AKT1, TNNI3 and SIRT1. Interacts with DLG5 (via PDZ domain 3). Interacts with MARK3 and SCRIB in the presence of DLG5. Requires Mg(2+) as cofactor. Post-translationally, autophosphorylated on serine and threonine residues. Phosphorylation at Thr-387 by PKB/AKT1, leads to inhibition of its: kinase activity, nuclear translocation and autophosphorylation at Thr-183. It also diminishes its cleavage by caspases and its ability to phosphorylate FOXO3. Proteolytically cleaved by caspase-3 during apoptosis at Asp-326 and Asp-349 resulting in a 37 kDa or a 39 kDa subunit respectively. The 39 kDa subunit is further cleaved into the 37 kDa form. Proteolytic cleavage results in kinase activation and nuclear translocation of the truncated form (MST1/N). It is less likely that cleavage at Asp-349 is a prerequisite for activation as this site is not conserved in the murine ortholog.

The protein localises to the cytoplasm. Its subcellular location is the nucleus. It carries out the reaction L-seryl-[protein] + ATP = O-phospho-L-seryl-[protein] + ADP + H(+). The enzyme catalyses L-threonyl-[protein] + ATP = O-phospho-L-threonyl-[protein] + ADP + H(+). Inhibited by the C-terminal non-catalytic region. Activated by caspase-cleavage. Full activation also requires homodimerization and autophosphorylation of Thr-183. Activated by RASSF1 which acts by preventing its dephosphorylation. Stress-activated, pro-apoptotic kinase which, following caspase-cleavage, enters the nucleus and induces chromatin condensation followed by internucleosomal DNA fragmentation. Key component of the Hippo signaling pathway which plays a pivotal role in organ size control and tumor suppression by restricting proliferation and promoting apoptosis. The core of this pathway is composed of a kinase cascade wherein STK3/MST2 and STK4/MST1, in complex with its regulatory protein SAV1, phosphorylates and activates LATS1/2 in complex with its regulatory protein MOB1, which in turn phosphorylates and inactivates YAP1 oncoprotein and WWTR1/TAZ. Phosphorylation of YAP1 by LATS2 inhibits its translocation into the nucleus to regulate cellular genes important for cell proliferation, cell death, and cell migration. STK3/MST2 and STK4/MST1 are required to repress proliferation of mature hepatocytes, to prevent activation of facultative adult liver stem cells (oval cells), and to inhibit tumor formation. Phosphorylates 'Ser-14' of histone H2B (H2BS14ph) during apoptosis. Phosphorylates FOXO3 upon oxidative stress, which results in its nuclear translocation and cell death initiation. Phosphorylates MOBKL1A, MOBKL1B and RASSF2. Phosphorylates TNNI3 (cardiac Tn-I) and alters its binding affinity to TNNC1 (cardiac Tn-C) and TNNT2 (cardiac Tn-T). Phosphorylates FOXO1 on 'Ser-212' and regulates its activation and stimulates transcription of PMAIP1 in a FOXO1-dependent manner. Phosphorylates SIRT1 and inhibits SIRT1-mediated p53/TP53 deacetylation, thereby promoting p53/TP53 dependent transcription and apoptosis upon DNA damage. Acts as an inhibitor of PKB/AKT1. Phosphorylates AR on 'Ser-650' and suppresses its activity by intersecting with PKB/AKT1 signaling and antagonizing formation of AR-chromatin complexes. The polypeptide is Serine/threonine-protein kinase 4 (STK4) (Macaca mulatta (Rhesus macaque)).